A 251-amino-acid polypeptide reads, in one-letter code: 5'-nucleotidase SurE (251 aa).

4 residues coordinate a divalent metal cation: Asp-8, Asp-9, Ser-39, and Asn-91.

This sequence belongs to the SurE nucleotidase family. The cofactor is a divalent metal cation.

The protein resides in the cytoplasm. It catalyses the reaction a ribonucleoside 5'-phosphate + H2O = a ribonucleoside + phosphate. Its function is as follows. Nucleotidase that shows phosphatase activity on nucleoside 5'-monophosphates. This chain is 5'-nucleotidase SurE, found in Methylococcus capsulatus (strain ATCC 33009 / NCIMB 11132 / Bath).